Consider the following 591-residue polypeptide: Probable auxin efflux carrier component 3b (591 aa).

Over M1–E6 the chain is Extracellular. Residues L7–S27 form a helical membrane-spanning segment. Over V28–Q38 the chain is Cytoplasmic. The chain crosses the membrane as a helical span at residues C39–I59. V51 lines the (indol-3-yl)acetate pocket. At S60–R70 the chain is on the extracellular side. The chain crosses the membrane as a helical span at residues F71–P93. The Cytoplasmic portion of the chain corresponds to A94–S107. The helical transmembrane segment at I108–V128 threads the bilayer. (indol-3-yl)acetate-binding residues include N118 and L120. The Extracellular segment spans residues S129–D137. A helical transmembrane segment spans residues L138–F158. Residue Y151 coordinates (indol-3-yl)acetate. Over E159 to S450 the chain is Cytoplasmic. Composition is skewed to polar residues over residues S243–T254 and S283–P292. Disordered regions lie at residues S243–R269, S283–N313, E344–A374, and A392–G420. Residues K395–T407 show a composition bias toward low complexity. The helical transmembrane segment at L451 to V471 threads the bilayer. The Extracellular segment spans residues A472 to S474. A helical transmembrane segment spans residues I475–A495. Residues T496–S511 lie on the Cytoplasmic side of the membrane. Residues M512 to I532 form a helical membrane-spanning segment. Residues R533–T535 lie on the Extracellular side of the membrane. A helical membrane pass occupies residues L536–A556. Residues I550 and V551 each coordinate (indol-3-yl)acetate. The Cytoplasmic portion of the chain corresponds to K557–T568. A helical membrane pass occupies residues L569–G589. The Extracellular segment spans residues L590–L591.

This sequence belongs to the auxin efflux carrier (TC 2.A.69.1) family. In terms of assembly, homodimer. Expressed in stem bases and leaves.

It localises to the membrane. Its function is as follows. May act as a component of the auxin efflux carrier. The sequence is that of Probable auxin efflux carrier component 3b from Oryza sativa subsp. japonica (Rice).